The chain runs to 257 residues: Thiazole synthase (257 aa).

K96 functions as the Schiff-base intermediate with DXP in the catalytic mechanism. 1-deoxy-D-xylulose 5-phosphate-binding positions include G157, 184–185 (AG), and 206–207 (NT).

This sequence belongs to the ThiG family. As to quaternary structure, homotetramer. Forms heterodimers with either ThiH or ThiS.

Its subcellular location is the cytoplasm. The catalysed reaction is [ThiS sulfur-carrier protein]-C-terminal-Gly-aminoethanethioate + 2-iminoacetate + 1-deoxy-D-xylulose 5-phosphate = [ThiS sulfur-carrier protein]-C-terminal Gly-Gly + 2-[(2R,5Z)-2-carboxy-4-methylthiazol-5(2H)-ylidene]ethyl phosphate + 2 H2O + H(+). Its pathway is cofactor biosynthesis; thiamine diphosphate biosynthesis. Functionally, catalyzes the rearrangement of 1-deoxy-D-xylulose 5-phosphate (DXP) to produce the thiazole phosphate moiety of thiamine. Sulfur is provided by the thiocarboxylate moiety of the carrier protein ThiS. In vitro, sulfur can be provided by H(2)S. The protein is Thiazole synthase of Rhizobium rhizogenes (strain K84 / ATCC BAA-868) (Agrobacterium radiobacter).